Here is a 187-residue protein sequence, read N- to C-terminus: GTP cyclohydrolase 1 (187 aa).

Zn(2+)-binding residues include Cys-76, His-79, and Cys-148.

It belongs to the GTP cyclohydrolase I family. As to quaternary structure, toroid-shaped homodecamer, composed of two pentamers of five dimers.

It carries out the reaction GTP + H2O = 7,8-dihydroneopterin 3'-triphosphate + formate + H(+). Its pathway is cofactor biosynthesis; 7,8-dihydroneopterin triphosphate biosynthesis; 7,8-dihydroneopterin triphosphate from GTP: step 1/1. The protein is GTP cyclohydrolase 1 of Streptococcus thermophilus (strain CNRZ 1066).